The following is a 352-amino-acid chain: Ketoisovalerate oxidoreductase subunit VorB (352 aa).

Heterotrimer of the VorA, VorB and VorC subunits.

The catalysed reaction is 3-methyl-2-oxobutanoate + 2 oxidized [2Fe-2S]-[ferredoxin] + CoA = 2-methylpropanoyl-CoA + 2 reduced [2Fe-2S]-[ferredoxin] + CO2 + H(+). This chain is Ketoisovalerate oxidoreductase subunit VorB (vorB), found in Methanothermobacter thermautotrophicus (strain ATCC 29096 / DSM 1053 / JCM 10044 / NBRC 100330 / Delta H) (Methanobacterium thermoautotrophicum).